Here is a 312-residue protein sequence, read N- to C-terminus: Dihydroorotate dehydrogenase B (NAD(+)), catalytic subunit (312 aa).

FMN is bound by residues serine 23 and 47-48 (KA). Substrate contacts are provided by residues lysine 47 and 71–75 (NAIGL). Asparagine 103 and asparagine 131 together coordinate FMN. Asparagine 131 is a substrate binding site. Cysteine 134 functions as the Nucleophile in the catalytic mechanism. FMN-binding residues include lysine 171 and isoleucine 197. 198-199 (NT) provides a ligand contact to substrate. FMN-binding positions include glycine 223, 249-250 (GG), and 271-272 (GT).

The protein belongs to the dihydroorotate dehydrogenase family. Type 1 subfamily. Heterotetramer of 2 PyrK and 2 PyrD type B subunits. FMN serves as cofactor.

It localises to the cytoplasm. It catalyses the reaction (S)-dihydroorotate + NAD(+) = orotate + NADH + H(+). It functions in the pathway pyrimidine metabolism; UMP biosynthesis via de novo pathway; orotate from (S)-dihydroorotate (NAD(+) route): step 1/1. In terms of biological role, catalyzes the conversion of dihydroorotate to orotate with NAD(+) as electron acceptor. The protein is Dihydroorotate dehydrogenase B (NAD(+)), catalytic subunit (pyrDB) of Streptococcus pneumoniae serotype 4 (strain ATCC BAA-334 / TIGR4).